A 162-amino-acid polypeptide reads, in one-letter code: NADH-quinone oxidoreductase subunit I (162 aa).

2 consecutive 4Fe-4S ferredoxin-type domains span residues 52–82 (LRRY…IEAG) and 93–122 (VRYD…EGPN). [4Fe-4S] cluster contacts are provided by Cys-62, Cys-65, Cys-68, Cys-72, Cys-102, Cys-105, Cys-108, and Cys-112.

This sequence belongs to the complex I 23 kDa subunit family. In terms of assembly, NDH-1 is composed of 14 different subunits. Subunits NuoA, H, J, K, L, M, N constitute the membrane sector of the complex. Requires [4Fe-4S] cluster as cofactor.

It localises to the cell inner membrane. It carries out the reaction a quinone + NADH + 5 H(+)(in) = a quinol + NAD(+) + 4 H(+)(out). NDH-1 shuttles electrons from NADH, via FMN and iron-sulfur (Fe-S) centers, to quinones in the respiratory chain. The immediate electron acceptor for the enzyme in this species is believed to be ubiquinone. Couples the redox reaction to proton translocation (for every two electrons transferred, four hydrogen ions are translocated across the cytoplasmic membrane), and thus conserves the redox energy in a proton gradient. The protein is NADH-quinone oxidoreductase subunit I of Afipia carboxidovorans (strain ATCC 49405 / DSM 1227 / KCTC 32145 / OM5) (Oligotropha carboxidovorans).